The following is a 603-amino-acid chain: Probable lysosomal cobalamin transporter (603 aa).

9 consecutive transmembrane segments (helical) span residues 13 to 33 (IWVA…ITVF), 50 to 70 (IVSL…IALV), 99 to 119 (IVYY…IPFA), 150 to 170 (IAFI…PTAA), 201 to 221 (LLMT…LALL), 318 to 338 (LFGG…MLIT), 353 to 373 (GYIL…VKAA), 381 to 401 (ILMA…IASV), and 422 to 442 (ALLI…YAVV). Asparagine 509 is a glycosylation site (N-linked (GlcNAc...) asparagine). Residues 512–532 (VFGAIDFWAQFAFLTVFLLVF) form a helical membrane-spanning segment. N-linked (GlcNAc...) asparagine glycosylation occurs at asparagine 543. Residues 578–603 (AKRTVGGHPNGQGYGTSGTNGTASSR) form a disordered region. Gly residues predominate over residues 585–595 (HPNGQGYGTSG). Asparagine 597 is a glycosylation site (N-linked (GlcNAc...) asparagine).

Belongs to the LIMR family. LMBRD1 subfamily.

It localises to the lysosome membrane. In terms of biological role, probable lysosomal cobalamin transporter. Required to export cobalamin from lysosomes allowing its conversion to cofactors. In Neurospora crassa (strain ATCC 24698 / 74-OR23-1A / CBS 708.71 / DSM 1257 / FGSC 987), this protein is Probable lysosomal cobalamin transporter.